Here is a 227-residue protein sequence, read N- to C-terminus: 7-cyano-7-deazaguanine synthase (227 aa).

An ATP-binding site is contributed by 7-17 (VSGGMDSLVAT). Zn(2+) is bound by residues C187, C195, C198, and C201.

The protein belongs to the QueC family. Requires Zn(2+) as cofactor.

The catalysed reaction is 7-carboxy-7-deazaguanine + NH4(+) + ATP = 7-cyano-7-deazaguanine + ADP + phosphate + H2O + H(+). It functions in the pathway purine metabolism; 7-cyano-7-deazaguanine biosynthesis. Catalyzes the ATP-dependent conversion of 7-carboxy-7-deazaguanine (CDG) to 7-cyano-7-deazaguanine (preQ(0)). The polypeptide is 7-cyano-7-deazaguanine synthase (Chlorobaculum parvum (strain DSM 263 / NCIMB 8327) (Chlorobium vibrioforme subsp. thiosulfatophilum)).